The following is a 519-amino-acid chain: Iroquois-class homeodomain protein IRX-4 (519 aa).

Positions G143–N204 form a DNA-binding region, homeobox; TALE-type. Positions N204–K298 are disordered. The segment covering K213–A222 has biased composition (basic and acidic residues). Composition is skewed to acidic residues over residues E223–R235 and L257–E267.

Belongs to the TALE/IRO homeobox family. In terms of assembly, interacts with the vitamin D receptor VDR but doesn't affect its transactivation activity. In terms of tissue distribution, predominantly expressed in cardiac ventricles.

It is found in the nucleus. In terms of biological role, likely to be an important mediator of ventricular differentiation during cardiac development. This Homo sapiens (Human) protein is Iroquois-class homeodomain protein IRX-4 (IRX4).